The chain runs to 343 residues: N-acetyl-gamma-glutamyl-phosphate reductase (343 aa).

Residue cysteine 147 is part of the active site.

Belongs to the NAGSA dehydrogenase family. Type 1 subfamily.

Its subcellular location is the cytoplasm. The enzyme catalyses N-acetyl-L-glutamate 5-semialdehyde + phosphate + NADP(+) = N-acetyl-L-glutamyl 5-phosphate + NADPH + H(+). The protein operates within amino-acid biosynthesis; L-arginine biosynthesis; N(2)-acetyl-L-ornithine from L-glutamate: step 3/4. Catalyzes the NADPH-dependent reduction of N-acetyl-5-glutamyl phosphate to yield N-acetyl-L-glutamate 5-semialdehyde. This Staphylococcus saprophyticus subsp. saprophyticus (strain ATCC 15305 / DSM 20229 / NCIMB 8711 / NCTC 7292 / S-41) protein is N-acetyl-gamma-glutamyl-phosphate reductase.